The sequence spans 406 residues: MARTEVSGKDRLSDLPCHLLCRILSNLSTKESVRTSVLSPRWSNLWSLVSVLDLDFQDFKGEHDMGEFIDSFMEYHEELGLKLKSFNMFYDANEHLHEPFVRRLNKVVRRGVCDLNIQNMVDVDVALVRMPPSLYSCATLVNLILYCVVFDHPRSKSVSLPSVKKMYFEGVKFDGDSVLETLISHSPVLEELTVIPHPEDYLEVICVRSQSLESFRLESKRFECDNPKVEIDSPSLEFMSICDKKPESLKIHRIGPFAEVTVDVEFDVEDDDPLEISKIRKFLVGLSTFHELTISARTLESIHDYSKVGPLPPFSNLFGLDASLVESSWEVLPAFLSCCMNLDSLVIELDCVPEMEEIKLSPVPQCVLSSLDFLQLKAPSTPSKMKLATYFRKKCTRLTKMLLSGQ.

The F-box domain occupies 9–59; that stretch reads KDRLSDLPCHLLCRILSNLSTKESVRTSVLSPRWSNLWSLVSVLDLDFQDF. The FBD domain occupies 355–405; the sequence is MEEIKLSPVPQCVLSSLDFLQLKAPSTPSKMKLATYFRKKCTRLTKMLLSG.

This is FBD-associated F-box protein At1g60410 from Arabidopsis thaliana (Mouse-ear cress).